Reading from the N-terminus, the 122-residue chain is Ribosome-binding factor A (122 aa).

Belongs to the RbfA family. In terms of assembly, monomer. Binds 30S ribosomal subunits, but not 50S ribosomal subunits or 70S ribosomes.

It localises to the cytoplasm. In terms of biological role, one of several proteins that assist in the late maturation steps of the functional core of the 30S ribosomal subunit. Associates with free 30S ribosomal subunits (but not with 30S subunits that are part of 70S ribosomes or polysomes). Required for efficient processing of 16S rRNA. May interact with the 5'-terminal helix region of 16S rRNA. The protein is Ribosome-binding factor A of Pelobacter propionicus (strain DSM 2379 / NBRC 103807 / OttBd1).